The primary structure comprises 70 residues: Large ribosomal subunit protein bL31 (70 aa).

Zn(2+)-binding residues include C16, C18, C37, and C40.

It belongs to the bacterial ribosomal protein bL31 family. Type A subfamily. Part of the 50S ribosomal subunit. It depends on Zn(2+) as a cofactor.

In terms of biological role, binds the 23S rRNA. This is Large ribosomal subunit protein bL31 from Desulfovibrio desulfuricans (strain ATCC 27774 / DSM 6949 / MB).